A 172-amino-acid polypeptide reads, in one-letter code: Stellate orphon protein at 12D (172 aa).

Belongs to the casein kinase 2 subunit beta family. As to quaternary structure, interacts in vitro with the casein kinase 2 alpha subunit (CkII-alpha). The relevance of such interaction is however unclear in vivo. In terms of tissue distribution, probably not expressed in wild-type flies. In males lacking the Y chromosome, it is testis-specific and constitutes the main component of star-shaped crystals.

Its function is as follows. Unknown. In males lacking the Y chromosome, its strong overexpression leads to the appearance of proteinaceous star-shaped crystals in the primary spermatocytes causing meiotic drive, possibly by interfering with normal casein kinase 2 activity. This Drosophila melanogaster (Fruit fly) protein is Stellate orphon protein at 12D (Ste12DOR).